The primary structure comprises 644 residues: Exoribonuclease 2 (644 aa).

Positions 189 to 516 constitute an RNB domain; the sequence is RRDLTALDFV…NHRLLKAIIK (328 aa). The region spanning 561–643 is the S1 motif domain; sequence DTRFAAEILD…ETRSIIARPA (83 aa).

It belongs to the RNR ribonuclease family. RNase II subfamily.

The protein resides in the cytoplasm. The enzyme catalyses Exonucleolytic cleavage in the 3'- to 5'-direction to yield nucleoside 5'-phosphates.. Functionally, involved in mRNA degradation. Hydrolyzes single-stranded polyribonucleotides processively in the 3' to 5' direction. In Klebsiella pneumoniae (strain 342), this protein is Exoribonuclease 2.